We begin with the raw amino-acid sequence, 2176 residues long: Methyl-CpG-binding domain-containing protein 9 (2176 aa).

The span at 1 to 13 (MEPTDSTNEQLGD) shows a compositional bias: polar residues. Disordered stretches follow at residues 1 to 20 (MEPT…AAVK) and 28 to 85 (GIDL…RDAS). The PHD-type 1 zinc-finger motif lies at 83-133 (DASCGACGRPESIELVVVCDACERGFHMSCVNDGVEAAPSADWMCSDCRTG). The RING-type 1; degenerate zinc-finger motif lies at 86–131 (CGACGRPESIELVVVCDACERGFHMSCVNDGVEAAPSADWMCSDCR). Residues 258-327 (RHFISERHGV…MDAEIRNENS (70 aa)) enclose the MBD domain. The region spanning 403 to 456 (GCPMQFEDFFVLSLGRIDIRQSYHNVNVIYPIGYKSCWHDKITGSLFTCEVSDG) is the FYR N-terminal domain. Residues 491–511 (EQNSDKLSNRRDSTQERDDDA) are a coiled coil. One can recognise an FYR C-terminal domain in the interval 550 to 698 (SSRVDFDKNL…ESCTNYRTLK (149 aa)). 3 short sequence motifs (nuclear localization signal) span residues 914 to 921 (SRRGRKKD), 1124 to 1131 (KKRTYISV), and 1256 to 1263 (YRKLECLS). One copy of the Pumilio repeat lies at 1098-1137 (PTKKAVLSLLADIRGGDLVQRSIKGTKKRTYISVSDVIMK). The 116-residue stretch at 1130-1245 (SVSDVIMKKC…EKFKSLYEAE (116 aa)) folds into the Bromo domain. The stretch at 1251–1273 (QKLKDYRKLECLSAEMKKEIKDI) forms a coiled coil. The PHD-type 2 zinc-finger motif lies at 1287–1337 (EGVCKVCGVDKDDDSVLLCDTCDAEYHTYCLNPPLIRIPDGNWYCPSCVIA). The RING-type 2; degenerate zinc finger occupies 1290 to 1335 (CKVCGVDKDDDSVLLCDTCDAEYHTYCLNPPLIRIPDGNWYCPSCV). The Nuclear localization signal motif lies at 1337–1344 (AKRMAQEA). Residues 1410 to 1437 (QHLEQCAEAIIEMQQKLRSLSSEWKNAK) adopt a coiled-coil conformation. Disordered stretches follow at residues 1472–1553 (GCDP…NLPE) and 1565–1595 (GRNH…QELQ). Composition is skewed to polar residues over residues 1492 to 1513 (SSTA…TQPG), 1523 to 1532 (KISSPETISS), and 1585 to 1595 (DASSQASQELQ). A coiled-coil region spans residues 1588 to 1628 (SQASQELQACQQDLSATSNEIQNLQQSIRSIESQLLKQSIR). The short motif at 1761–1768 (EKRYGPCI) is the Nuclear localization signal element. A disordered region spans residues 2136 to 2176 (IDETKPIISLPDQKSQPVSDSQERSSRVRRSGKKRKEPEGS).

Interacts with histone H4. Expressed in leaves, buds, flowers and stems.

The protein resides in the nucleus. It carries out the reaction L-lysyl-[protein] + acetyl-CoA = N(6)-acetyl-L-lysyl-[protein] + CoA + H(+). In terms of biological role, probable transcriptional regulator that acts as a histone acetyltransferase. Mediates the acetylation of histone H3 and H4 of target loci (e.g. FLC). Involved in an auxin-independent regulation of shoot branching and flowering time. This Arabidopsis thaliana (Mouse-ear cress) protein is Methyl-CpG-binding domain-containing protein 9 (MBD9).